Here is a 273-residue protein sequence, read N- to C-terminus: Spore development regulator vosA (273 aa).

Over residues 66-75 (STTQELQSTQ) the composition is skewed to low complexity. The segment at 66–86 (STTQELQSTQPIAVRQQPRAA) is disordered. In terms of domain architecture, Velvet spans 70 to 253 (ELQSTQPIAV…KEQGCIISIK (184 aa)). The Nuclear localization signal motif lies at 211–218 (FPTLTEIK). The span at 254-267 (KGNERARPRGADGR) shows a compositional bias: basic and acidic residues. The tract at residues 254–273 (KGNERARPRGADGRSDDEDD) is disordered.

Belongs to the velvet family. VosA subfamily. In terms of assembly, forms a heterodimeric complex with velB; the formation of the velB-vosA complex is light-dependent.

The protein localises to the nucleus. Component of the velB-vosA heterodimeric complex that plays a dual role in activating genes associated with spore maturation and repressing certain development-associated genes. The complex binds DNA through the DNA-binding domain of vosA that recognizes an 11-nucleotide consensus sequence 5'-CTGGCCGCGGC-3' consisting of two motifs in the promoters of key developmental regulatory genes. Positively regulates the expression of wetA and represses abaA and brlA. Acts as a crucial regulator of both conidiation capacity and conidial quality. Responsible for the synthesis and accumulation of intracellular trehalose. The sequence is that of Spore development regulator vosA from Beauveria bassiana (strain ARSEF 2860) (White muscardine disease fungus).